A 189-amino-acid chain; its full sequence is Pyridoxal 5'-phosphate synthase subunit PdxT (189 aa).

52–54 (GES) is an L-glutamine binding site. Cys81 serves as the catalytic Nucleophile. L-glutamine contacts are provided by residues Arg108 and 136–137 (IR). Catalysis depends on charge relay system residues His172 and Glu174.

It belongs to the glutaminase PdxT/SNO family. In the presence of PdxS, forms a dodecamer of heterodimers. Only shows activity in the heterodimer.

It carries out the reaction aldehydo-D-ribose 5-phosphate + D-glyceraldehyde 3-phosphate + L-glutamine = pyridoxal 5'-phosphate + L-glutamate + phosphate + 3 H2O + H(+). It catalyses the reaction L-glutamine + H2O = L-glutamate + NH4(+). The protein operates within cofactor biosynthesis; pyridoxal 5'-phosphate biosynthesis. Its function is as follows. Catalyzes the hydrolysis of glutamine to glutamate and ammonia as part of the biosynthesis of pyridoxal 5'-phosphate. The resulting ammonia molecule is channeled to the active site of PdxS. This is Pyridoxal 5'-phosphate synthase subunit PdxT from Haemophilus ducreyi (strain 35000HP / ATCC 700724).